Here is a 141-residue protein sequence, read N- to C-terminus: 3-hydroxyacyl-[acyl-carrier-protein] dehydratase FabZ (141 aa).

The active site involves His48.

The protein belongs to the thioester dehydratase family. FabZ subfamily.

The protein localises to the cytoplasm. The catalysed reaction is a (3R)-hydroxyacyl-[ACP] = a (2E)-enoyl-[ACP] + H2O. Functionally, involved in unsaturated fatty acids biosynthesis. Catalyzes the dehydration of short chain beta-hydroxyacyl-ACPs and long chain saturated and unsaturated beta-hydroxyacyl-ACPs. This Bacillus velezensis (strain DSM 23117 / BGSC 10A6 / LMG 26770 / FZB42) (Bacillus amyloliquefaciens subsp. plantarum) protein is 3-hydroxyacyl-[acyl-carrier-protein] dehydratase FabZ.